A 487-amino-acid chain; its full sequence is Cytochrome P450 2C4 (487 aa).

Cys432 contacts heme.

It belongs to the cytochrome P450 family. It depends on heme as a cofactor.

The protein resides in the endoplasmic reticulum membrane. The protein localises to the microsome membrane. It catalyses the reaction an organic molecule + reduced [NADPH--hemoprotein reductase] + O2 = an alcohol + oxidized [NADPH--hemoprotein reductase] + H2O + H(+). In terms of biological role, cytochromes P450 are a group of heme-thiolate monooxygenases. In liver microsomes, this enzyme is involved in an NADPH-dependent electron transport pathway. It oxidizes a variety of structurally unrelated compounds, including steroids, fatty acids, and xenobiotics. The chain is Cytochrome P450 2C4 (CYP2C4) from Oryctolagus cuniculus (Rabbit).